A 248-amino-acid polypeptide reads, in one-letter code: mRNA-decapping protein OPG122 (248 aa).

Residues 45-227 (HKRVSVSAIL…IAKYALDTAK (183 aa)) enclose the Nudix hydrolase domain. The Nudix box signature appears at 126–147 (GIPKRGENVPECLSREIKEEVN). Residue E132 participates in Mg(2+) binding. E141 (nucleophile) is an active-site residue. Position 145 (E145) interacts with Mn(2+). Position 167 (D167) interacts with Mg(2+).

The protein belongs to the Nudix hydrolase family. Requires Mg(2+) as cofactor. The cofactor is Mn(2+).

The protein resides in the host mitochondrion. Functionally, decapping enzyme that remove the protective 5'-cap from both host and viral mRNAs to commit transcripts for decay by the cellular exonuclease XRN1. Preferentially targets spliced mRNAs and since all viral genes are intronless, it preferentially targets host over viral transcripts. Acceleration of the turnover of cellular transcripts promotes the shutoff of host protein synthesis and therefore diminish the magnitude of antiviral response. In Bos taurus (Bovine), this protein is mRNA-decapping protein OPG122 (OPG122).